Consider the following 213-residue polypeptide: Imidazole glycerol phosphate synthase subunit HisH (213 aa).

The Glutamine amidotransferase type-1 domain maps to 4–211; that stretch reads NLGVIDYGMG…LHWLHQGAEP (208 aa). Cys82 (nucleophile) is an active-site residue. Catalysis depends on residues His186 and Glu188.

Heterodimer of HisH and HisF.

The protein resides in the cytoplasm. The enzyme catalyses 5-[(5-phospho-1-deoxy-D-ribulos-1-ylimino)methylamino]-1-(5-phospho-beta-D-ribosyl)imidazole-4-carboxamide + L-glutamine = D-erythro-1-(imidazol-4-yl)glycerol 3-phosphate + 5-amino-1-(5-phospho-beta-D-ribosyl)imidazole-4-carboxamide + L-glutamate + H(+). It catalyses the reaction L-glutamine + H2O = L-glutamate + NH4(+). The protein operates within amino-acid biosynthesis; L-histidine biosynthesis; L-histidine from 5-phospho-alpha-D-ribose 1-diphosphate: step 5/9. Its function is as follows. IGPS catalyzes the conversion of PRFAR and glutamine to IGP, AICAR and glutamate. The HisH subunit catalyzes the hydrolysis of glutamine to glutamate and ammonia as part of the synthesis of IGP and AICAR. The resulting ammonia molecule is channeled to the active site of HisF. The protein is Imidazole glycerol phosphate synthase subunit HisH of Synechococcus sp. (strain CC9902).